The sequence spans 291 residues: Asialoglycoprotein receptor 1 (291 aa).

Residues 1 to 19 (MTKECQDLQHLDNEESDHH) show a composition bias toward basic and acidic residues. The interval 1-27 (MTKECQDLQHLDNEESDHHQLRKGPPP) is disordered. The Cytoplasmic portion of the chain corresponds to 1–40 (MTKECQDLQHLDNEESDHHQLRKGPPPSQPLLQRLCSGPR). The Endocytosis signal signature appears at 5 to 8 (CQDL). Ser16 carries the phosphoserine modification. The S-palmitoyl cysteine moiety is linked to residue Cys36. Residues 41-61 (LLLLSLGLSLLLLVVVCVIGS) traverse the membrane as a helical; Signal-anchor for type II membrane protein segment. A coiled-coil region spans residues 61–123 (SQNSQLQKEL…KDLSEDHSSL (63 aa)). Topologically, residues 62–291 (QNSQLQKELR…DKASQEPPLL (230 aa)) are extracellular. N-linked (GlcNAc...) asparagine glycosylation is found at Asn79 and Asn147. Intrachain disulfides connect Cys154/Cys165, Cys182/Cys277, and Cys255/Cys269. Positions 161–278 (HERSCYWFSR…CQRPYRWVCE (118 aa)) constitute a C-type lectin domain. Ca(2+) is bound by residues Val191, Glu197, Asp216, Gln240, Asp242, Asp243, Glu253, Asp254, Asn265, Asp266, and Glu278. Position 285 is a phosphoserine (Ser285).

In terms of assembly, interacts with LASS2. In terms of processing, phosphorylated on a cytoplasmic Ser residue.

Its subcellular location is the membrane. In terms of biological role, mediates the endocytosis of plasma glycoproteins to which the terminal sialic acid residue on their complex carbohydrate moieties has been removed. The receptor recognizes terminal galactose and N-acetylgalactosamine units. After ligand binding to the receptor, the resulting complex is internalized and transported to a sorting organelle, where receptor and ligand are disassociated. The receptor then returns to the cell membrane surface. The sequence is that of Asialoglycoprotein receptor 1 (ASGR1) from Pongo abelii (Sumatran orangutan).